Consider the following 587-residue polypeptide: Cyclic di-GMP phosphodiesterase PA2567 (587 aa).

In terms of domain architecture, GAF spans Asp28 to Ala157. Residues Gly192–Pro327 form the GGDEF domain. Residues Ala335–Arg587 enclose the EAL domain.

The catalysed reaction is 3',3'-c-di-GMP + H2O = 5'-phosphoguanylyl(3'-&gt;5')guanosine + H(+). Its function is as follows. Phosphodiesterase (PDE) that catalyzes the hydrolysis of cyclic diguanylate (c-di-GMP) to 5'-pGpG. This Pseudomonas aeruginosa (strain ATCC 15692 / DSM 22644 / CIP 104116 / JCM 14847 / LMG 12228 / 1C / PRS 101 / PAO1) protein is Cyclic di-GMP phosphodiesterase PA2567.